The sequence spans 207 residues: Ras-related protein Rab-7a (207 aa).

The residue at position 2 (Thr2) is an N-acetylthreonine. GTP-binding residues include Ser17, Gly18, Val19, Gly20, Lys21, Thr22, Ser23, Ser34, Asn35, Tyr37, and Thr40. Mg(2+) is bound at residue Thr22. The Switch 1 signature appears at 28–41; that stretch reads YVNKKFSNQYKATI. Mg(2+)-binding residues include Thr40 and Asp63. Gly66 serves as a coordination point for GTP. The Switch 2 signature appears at 67 to 82; the sequence is QERFQSLGVAFYRGAD. Phosphoserine is present on Ser72. GTP contacts are provided by Asn125, Lys126, Asp128, Ala156, and Lys157. Glycyl lysine isopeptide (Lys-Gly) (interchain with G-Cter in ubiquitin) cross-links involve residues Lys191 and Lys194. 2 S-geranylgeranyl cysteine lipidation sites follow: Cys205 and Cys207. Cys207 is modified (cysteine methyl ester).

It belongs to the small GTPase superfamily. Rab family. As to quaternary structure, interacts with NTRK1/TRKA. Interacts with RILP. Interacts with PSMA7. Interacts with RNF115. Interacts with FYCO1. Interacts with the PIK3C3/VPS34-PIK3R4 complex. The GTP-bound form interacts with OSBPL1A. The GTP-bound form interacts with RAC1. Interacts with CLN3. Interacts with CHM, the substrate-binding subunit of the Rab geranylgeranyltransferase complex. Interacts with C9orf72. Does not interact with HPS4 and the BLOC-3 complex (heterodimer of HPS1 and HPS4). Interacts with CLN5. Interacts with PLEKHM1 (via N- and C-terminus). Interacts with PRPH; the interaction is direct. Interacts with VPS13A. The GDP-bound form interacts with RIMOC1. Interacts with the MON1A-CCZ1B complex and this interaction is enhanced in the presence of RIMOC1. Interacts with VPS39 and VPS41. Forms a ternary complex with LAMP2 and RUFY4; the interaction with LAMP2 is mediated by RUFY4 (via RUN and coiled coil domains). Mg(2+) serves as cofactor. Deubiquitination at Lys-191 and Lys-194 by USP32. Post-translationally, phosphorylated at Ser-72 by LRRK1; phosphorylation is dependent on protein kinase C (PKC) activation of LRRK1. In terms of processing, prenylated. Prenylation is required for association with cellular membranes.

The protein localises to the cytoplasmic vesicle. It localises to the phagosome membrane. It is found in the late endosome membrane. Its subcellular location is the lysosome membrane. The protein resides in the melanosome membrane. The protein localises to the autophagosome membrane. It localises to the lipid droplet. It is found in the endosome membrane. Its subcellular location is the mitochondrion membrane. It catalyses the reaction GTP + H2O = GDP + phosphate + H(+). With respect to regulation, regulated by guanine nucleotide exchange factors (GEFs) which promote the exchange of bound GDP for free GTP. Regulated by GTPase activating proteins (GAPs) which increase the GTP hydrolysis activity. Inhibited by GDP dissociation inhibitors (GDIs). Its function is as follows. The small GTPases Rab are key regulators of intracellular membrane trafficking, from the formation of transport vesicles to their fusion with membranes. Rabs cycle between an inactive GDP-bound form and an active GTP-bound form that is able to recruit to membranes different sets of downstream effectors directly responsible for vesicle formation, movement, tethering and fusion. In its active state, RAB7A binds to a variety of effector proteins playing a key role in the regulation of endo-lysosomal trafficking. Governs early-to-late endosomal maturation, microtubule minus-end as well as plus-end directed endosomal migration and positioning, and endosome-lysosome transport through different protein-protein interaction cascades. Also plays a central role in growth-factor-mediated cell signaling, nutrient-transporter-mediated nutrient uptake, neurotrophin transport in the axons of neurons and lipid metabolism. Also involved in regulation of some specialized endosomal membrane trafficking, such as maturation of melanosomes, pathogen-induced phagosomes (or vacuoles) and autophagosomes. Plays a role in the maturation and acidification of phagosomes that engulf pathogens, such as S.aureus and Mycobacteria. Plays a role in the fusion of phagosomes with lysosomes. In concert with RAC1, plays a role in regulating the formation of RBs (ruffled borders) in osteoclasts. Controls the endosomal trafficking and neurite outgrowth signaling of NTRK1/TRKA. Regulates the endocytic trafficking of the EGF-EGFR complex by regulating its lysosomal degradation. Involved in the ADRB2-stimulated lipolysis through lipophagy, a cytosolic lipase-independent autophagic pathway. Required for the exosomal release of SDCBP, CD63 and syndecan. Required for vesicular trafficking and cell surface expression of ACE2. May play a role in PRPH neuronal intermediate filament assembly. This chain is Ras-related protein Rab-7a (RAB7A), found in Bos taurus (Bovine).